A 1201-amino-acid chain; its full sequence is ATPase with bromodomain protein abo2 (1201 aa).

2 disordered regions span residues 1-223 (MRRR…MRGP) and 305-324 (CDSDETSELSSTSSEQTSDV). A compositionally biased stretch (acidic residues) spans 13 to 24 (DDNEDNEEDDDY). Basic and acidic residues predominate over residues 29-38 (HSEKSEDHSN). Residues 66 to 89 (FSSLQKHLNTETPSFSVSIENPSK) show a composition bias toward polar residues. Residues 129-146 (TDNNEDESTTFKDEEDDL) show a composition bias toward acidic residues. The segment covering 212–221 (RRGRRKRKMR) has biased composition (basic residues). Residues 312–323 (ELSSTSSEQTSD) show a composition bias toward low complexity. 413–420 (GPPGTGKT) provides a ligand contact to ATP. The region spanning 897 to 1026 (KIKNKIQVKL…AHAELNVDEL (130 aa)) is the Bromo domain.

It belongs to the AAA ATPase family.

Its subcellular location is the nucleus. It carries out the reaction ATP + H2O = ADP + phosphate + H(+). Its function is as follows. Probable ATPase which may play a role in nucleosome organization. This Schizosaccharomyces pombe (strain 972 / ATCC 24843) (Fission yeast) protein is ATPase with bromodomain protein abo2.